We begin with the raw amino-acid sequence, 182 residues long: Cell wall protein phiA (182 aa).

An N-terminal signal peptide occupies residues 1-18 (MKLTSTAALASLAVAATA). N57 and N107 each carry an N-linked (GlcNAc...) asparagine glycan.

The protein belongs to the phiA family. Mainly present in phialides and conidia.

The protein localises to the secreted. Its subcellular location is the cell wall. Functionally, cell wall protein involved in development of asexual structures such as phialide and conidium development, and thus required for spore formation. Plays a role as a general stress protectant produced by the fungus in competition with antagonistic bacteria. In Emericella nidulans (strain FGSC A4 / ATCC 38163 / CBS 112.46 / NRRL 194 / M139) (Aspergillus nidulans), this protein is Cell wall protein phiA.